The chain runs to 943 residues: Isoleucine--tRNA ligase (943 aa).

Positions 59–69 (PYANGQIHLGH) match the 'HIGH' region motif. Glutamate 577 lines the L-isoleucyl-5'-AMP pocket. The 'KMSKS' region signature appears at 618-622 (KMSKS). Lysine 621 provides a ligand contact to ATP. Zn(2+)-binding residues include cysteine 906, cysteine 909, cysteine 926, and cysteine 929.

This sequence belongs to the class-I aminoacyl-tRNA synthetase family. IleS type 1 subfamily. Monomer. Requires Zn(2+) as cofactor.

The protein localises to the cytoplasm. The catalysed reaction is tRNA(Ile) + L-isoleucine + ATP = L-isoleucyl-tRNA(Ile) + AMP + diphosphate. Its function is as follows. Catalyzes the attachment of isoleucine to tRNA(Ile). As IleRS can inadvertently accommodate and process structurally similar amino acids such as valine, to avoid such errors it has two additional distinct tRNA(Ile)-dependent editing activities. One activity is designated as 'pretransfer' editing and involves the hydrolysis of activated Val-AMP. The other activity is designated 'posttransfer' editing and involves deacylation of mischarged Val-tRNA(Ile). In Xylella fastidiosa (strain 9a5c), this protein is Isoleucine--tRNA ligase.